A 265-amino-acid polypeptide reads, in one-letter code: Aquaporin-5 (265 aa).

Topologically, residues 1-12 (MKKEVCSAAFLK) are cytoplasmic. Residues 13 to 33 (AVFAEFLATLIFVFFGLGSAL) traverse the membrane as a helical segment. Residues 34-39 (KWPSAM) are Extracellular-facing. A helical transmembrane segment spans residues 40 to 60 (PSVLQISLAFGLAIGTMAQAL). Residues 61–65 (GPVSG) lie on the Cytoplasmic side of the membrane. An intramembrane region (discontinuously helical) is located at residues 66–74 (GHMNPAITL). Residues 69 to 71 (NPA) carry the NPA 1 motif. Residues 75 to 87 (ALLVGNQISLLRA) are Cytoplasmic-facing. The chain crosses the membrane as a helical span at residues 88-108 (VFYLVAQLVGAIAGAAILYGL). The Extracellular portion of the chain corresponds to 109–126 (APYNARSNLAVNALNNNT). N124 and N125 each carry an N-linked (GlcNAc...) asparagine glycan. The chain crosses the membrane as a helical span at residues 127–147 (TAGQAVVAEMILTFQLALCVF). The Cytoplasmic segment spans residues 148–158 (SSTDSRRTSPV). The helical transmembrane segment at 159–179 (GSPALSIGLSVTLGHLVGIYF) threads the bilayer. A topological domain (extracellular) is located at residue T180. Residues 181–191 (GCSMNPARSFG) constitute an intramembrane region (discontinuously helical). An NPA 2 motif is present at residues 185-187 (NPA). Topologically, residues 192-203 (PAVIMSRFSSAH) are extracellular. The helical transmembrane segment at 204–224 (WVFWVGPIVGAATAAIIYFYL) threads the bilayer. Residues 225–265 (LFPHSLSLSDRVAILKGTYEPDEDWEESQEERKKTMELTAH) lie on the Cytoplasmic side of the membrane.

It belongs to the MIP/aquaporin (TC 1.A.8) family. In terms of assembly, homotetramer; each monomer provides an independent water pore. Interacts with TRPV4; the interaction is probably indirect and regulates TRPV4 activation by hypotonicity.

The protein localises to the apical cell membrane. Its subcellular location is the cell membrane. It localises to the cytoplasmic vesicle membrane. It catalyses the reaction H2O(in) = H2O(out). Functionally, aquaporins form homotetrameric transmembrane channels, with each monomer independently mediating water transport across the plasma membrane along its osmotic gradient. Plays an important role in fluid secretion in salivary glands. Required for TRPV4 activation by hypotonicity. Together with TRPV4, controls regulatory volume decrease in salivary epithelial cells. Seems to play a redundant role in water transport in the eye, lung and in sweat glands. The polypeptide is Aquaporin-5 (Ovis aries (Sheep)).